Consider the following 375-residue polypeptide: Secondary metabolism regulator laeA (375 aa).

Over residues 15 to 26 (ASPNRNNYSYQG) the composition is skewed to polar residues. 2 disordered regions span residues 15–37 (ASPNRNNYSYQGIESYDSGRSRQ) and 50–75 (QEPPREPPDNNDPYDGHGGPAGTSHY).

The protein belongs to the methyltransferase superfamily. LaeA methyltransferase family. As to quaternary structure, component of the heterotrimeric velvet complex composed of laeA, veA and velB; VeA acting as a bridging protein between laeA and velB.

Its subcellular location is the nucleus. It catalyses the reaction L-methionyl-[protein] + S-adenosyl-L-methionine = S-methyl-L-methionyl-[protein] + S-adenosyl-L-homocysteine. Methyltransferase that performs automethylation. No other methyl-accepting substrate has been identified yet. Component of the velvet transcription factor complex that acts as a global regulator for secondary metabolite gene expression. Controls the expression of the citric acid, demethylkotanin, orlandin, asperrubrol, tensidol B, atromentin and JBIR8 gene clusters. Also represses the expression of genes related to the production of BMS-192548 and aspernigrin A. The chain is Secondary metabolism regulator laeA from Aspergillus niger (strain ATCC 1015 / CBS 113.46 / FGSC A1144 / LSHB Ac4 / NCTC 3858a / NRRL 328 / USDA 3528.7).